We begin with the raw amino-acid sequence, 330 residues long: GTP 3',8-cyclase (330 aa).

Residues 9 to 225 enclose the Radical SAM core domain; the sequence is RFGRTVNYVR…IRRHHELIPA (217 aa). Residue R18 participates in GTP binding. The [4Fe-4S] cluster site is built by C25 and C29. Y31 lines the S-adenosyl-L-methionine pocket. C32 is a [4Fe-4S] cluster binding site. GTP is bound at residue R67. Position 71 (G71) interacts with S-adenosyl-L-methionine. Position 97 (T97) interacts with GTP. An S-adenosyl-L-methionine-binding site is contributed by S121. Residue K158 coordinates GTP. M192 is a binding site for S-adenosyl-L-methionine. Residues C256 and C259 each contribute to the [4Fe-4S] cluster site. 261–263 contributes to the GTP binding site; sequence RVR. Residue C273 coordinates [4Fe-4S] cluster.

This sequence belongs to the radical SAM superfamily. MoaA family. In terms of assembly, monomer and homodimer. [4Fe-4S] cluster is required as a cofactor.

The catalysed reaction is GTP + AH2 + S-adenosyl-L-methionine = (8S)-3',8-cyclo-7,8-dihydroguanosine 5'-triphosphate + 5'-deoxyadenosine + L-methionine + A + H(+). Its pathway is cofactor biosynthesis; molybdopterin biosynthesis. Catalyzes the cyclization of GTP to (8S)-3',8-cyclo-7,8-dihydroguanosine 5'-triphosphate. The chain is GTP 3',8-cyclase from Marinobacter nauticus (strain ATCC 700491 / DSM 11845 / VT8) (Marinobacter aquaeolei).